Reading from the N-terminus, the 667-residue chain is E3 ubiquitin-protein ligase Midline-1 (667 aa).

An RING-type zinc finger spans residues 10–60 (CPICLELLEDPLLLPCAHSLCFNCAHRILVSHCATNEPVESINAFQCPTCR). 2 positions are modified to phosphoserine: Ser-92 and Ser-96. 2 B box-type zinc fingers span residues 116 to 165 (KVLC…IEPI) and 172 to 212 (GLMC…VAAL). Zn(2+) contacts are provided by Cys-119, Cys-122, Cys-134, Cys-137, Cys-142, Cys-145, His-150, His-159, Cys-175, His-178, Cys-198, and His-204. A coiled-coil region spans residues 205–264 (RDHQVAALSERYDKLKQNLESNLTNLIKRNTELETLLAKLIQTCQHVEVNASRQEAKLTE). Residues 320 to 379 (LKENDHARFLQTAKNITERVSMATASSQVLIPEINLNDTFDTFALDFSREKKLLECLDYL) enclose the COS domain. Residues 381-484 (APNPPTIREE…EPGKLKTNSQ (104 aa)) form the Fibronectin type-III domain. Residues 471 to 485 (SRSSEPGKLKTNSQP) are compositionally biased toward polar residues. A disordered region spans residues 471–524 (SRSSEPGKLKTNSQPFKLDPKSAHRKLKVSHDNLTVERDESSSKKSHTPERFTS). The 178-residue stretch at 482–659 (NSQPFKLDPK…IITGLPIPDH (178 aa)) folds into the B30.2/SPRY domain. The segment covering 499 to 520 (VSHDNLTVERDESSSKKSHTPE) has biased composition (basic and acidic residues). Residue Ser-511 is modified to Phosphoserine.

Belongs to the TRIM/RBCC family. As to quaternary structure, homodimer or heterodimer with MID2. Interacts with IGBP1.

The protein localises to the cytoplasm. Its subcellular location is the cytoskeleton. It catalyses the reaction S-ubiquitinyl-[E2 ubiquitin-conjugating enzyme]-L-cysteine + [acceptor protein]-L-lysine = [E2 ubiquitin-conjugating enzyme]-L-cysteine + N(6)-ubiquitinyl-[acceptor protein]-L-lysine.. Its function is as follows. Has E3 ubiquitin ligase activity towards IGBP1, promoting its monoubiquitination, which results in deprotection of the catalytic subunit of protein phosphatase PP2A, and its subsequent degradation by polyubiquitination. In Mus spretus (Western Mediterranean mouse), this protein is E3 ubiquitin-protein ligase Midline-1 (Mid1).